The following is a 326-amino-acid chain: Probable cell division protein WhiA (326 aa).

The H-T-H motif DNA-binding region spans 275 to 308 (SLDELGHHADPPMTKDAVAGRIRRLLAMADKKAV).

It belongs to the WhiA family.

In terms of biological role, involved in cell division and chromosome segregation. This Clavibacter michiganensis subsp. michiganensis (strain NCPPB 382) protein is Probable cell division protein WhiA.